A 514-amino-acid chain; its full sequence is Histidine ammonia-lyase (514 aa).

The 5-imidazolinone (Ala-Gly) cross-link spans 146-148 (ASG). The residue at position 147 (S147) is a 2,3-didehydroalanine (Ser).

It belongs to the PAL/histidase family. In terms of processing, contains an active site 4-methylidene-imidazol-5-one (MIO), which is formed autocatalytically by cyclization and dehydration of residues Ala-Ser-Gly.

Its subcellular location is the cytoplasm. The catalysed reaction is L-histidine = trans-urocanate + NH4(+). It functions in the pathway amino-acid degradation; L-histidine degradation into L-glutamate; N-formimidoyl-L-glutamate from L-histidine: step 1/3. This is Histidine ammonia-lyase from Clostridium tetani (strain Massachusetts / E88).